The following is a 382-amino-acid chain: Histidinol-phosphate aminotransferase (382 aa).

Lys-215 bears the N6-(pyridoxal phosphate)lysine mark. The segment at 363–382 (NIDNQSKTHSQTSSIRKGTI) is disordered.

This sequence belongs to the class-II pyridoxal-phosphate-dependent aminotransferase family. Histidinol-phosphate aminotransferase subfamily. As to quaternary structure, homodimer. It depends on pyridoxal 5'-phosphate as a cofactor.

The enzyme catalyses L-histidinol phosphate + 2-oxoglutarate = 3-(imidazol-4-yl)-2-oxopropyl phosphate + L-glutamate. The protein operates within amino-acid biosynthesis; L-histidine biosynthesis; L-histidine from 5-phospho-alpha-D-ribose 1-diphosphate: step 7/9. The sequence is that of Histidinol-phosphate aminotransferase from Yersinia pseudotuberculosis serotype O:1b (strain IP 31758).